The primary structure comprises 58 residues: uncharacterized protein (58 aa).

2 helical membrane-spanning segments follow: residues 7–27 (IFDI…VAKT) and 29–49 (YGTG…AYKI).

The protein resides in the cell membrane. This is an uncharacterized protein from Bacillus subtilis (strain 168).